Consider the following 2301-residue polypeptide: Genome polyprotein (2301 aa).

A zinc finger spans residues 3–14 (CKHGYPDVCPIC). The acidic stretch occupies residues 30–46 (DGEWFPTDLLCVDLDDD). The segment at 60 to 73 (MEWTDLPLVRDIVM) is theilo. Glycine 77 carries N-myristoyl glycine; by host lipidation. Residues cysteine 501 and cysteine 503 are joined by a disulfide bond. Positions 1039-1045 (YYKQRLI) are host EIF4E binding. The SF3 helicase domain maps to 1281 to 1446 (IPLASLCEKF…CTTSNGMLDI (166 aa)). 1310–1317 (GAAGQGKS) lines the ATP pocket. Tyrosine 1606 carries the post-translational modification O-(5'-phospho-RNA)-tyrosine. The 194-residue stretch at 1634–1827 (NPVMDFELFC…AATIITRELI (194 aa)) folds into the Peptidase C3 domain. Active-site for protease 3C activity residues include histidine 1678, aspartate 1712, and cysteine 1791. Residues 2069-2187 (NYVYDVDYSN…GTNYQIDFNL (119 aa)) enclose the RdRp catalytic domain. Catalysis depends on for RdRp activity residues aspartate 2075 and aspartate 2173.

It belongs to the picornaviruses polyprotein family. In terms of assembly, interacts with host EIF4E. Interacts with the leader protein. Interacts with host RAN; the complex L-RAN recruits cellular kinases responsible for the L-induced nucleocytoplasmic trafficking inhibition. The complex L-RAN can further bind to the host exportins XPO1/CRM1 and CSE1L/CAS. Interacts with the protein 2A. Interacts with host RNASEL; this interaction prevents RNASEL activation by its substrate 2'-5' oligoadenylates. Post-translationally, phosphorylated. In terms of processing, specific enzymatic cleavages by the viral protease in vivo yield a variety of precursors and mature proteins. The polyprotein seems to be cotranslationally cleaved at the 2A/2B junction by a ribosomal skip from one codon to the next without formation of a peptide bond. This process would release the P1-2A peptide from the translational complex. During virion maturation, immature virions are rendered infectious following cleavage of VP0 into VP4 and VP2. This maturation seems to be an autocatalytic event triggered by the presence of RNA in the capsid and is followed by a conformational change of the particle. Post-translationally, uridylylated by the polymerase and is covalently linked to the 5'-end of genomic RNA. This uridylylated form acts as a nucleotide-peptide primer for the polymerase. In terms of processing, myristoylation is required during RNA encapsidation and formation of the mature virus particle.

Its subcellular location is the virion. The protein resides in the host cytoplasm. The protein localises to the host nucleus. It is found in the host nucleolus. It localises to the host cytoplasmic vesicle membrane. It catalyses the reaction RNA(n) + a ribonucleoside 5'-triphosphate = RNA(n+1) + diphosphate. The catalysed reaction is ATP + H2O = ADP + phosphate + H(+). It carries out the reaction Selective cleavage of Gln-|-Gly bond in the poliovirus polyprotein. In other picornavirus reactions Glu may be substituted for Gln, and Ser or Thr for Gly.. Its function is as follows. Forms a complex with host RAN and probably binds to exportins carrying activated MAPK in order to mediate the hyperphosphorylation of host Phe/Gly containing nuclear pore proteins (Nups) resulting in cessation of active nucleocytoplasmic transport. Proteins with NLS signals fail to import, cellular mRNAs fail to export, and some proteins small enough for diffusion are not retained anymore (efflux). The resulting inhibition of cellular protein synthesis serves to ensure maximal viral gene expression and to evade host immune response. The leader protein also inhibits host interferon regulatory factor 3 (IRF3) dimerization, thereby blocking the transcriptional activation of IFN genes. Binds to host RNase L thereby preventing its activation by 2'-5' oligoadenylates in order to counteract the antiviral interferon-inducible OAS/RNase L pathway. Forms an icosahedral capsid of pseudo T=3 symmetry with capsid proteins VP2 and VP3. Together they form an icosahedral capsid composed of 60 copies of each VP1, VP2, and VP3, with a diameter of approximately 300 Angstroms. VP4 lies on the inner surface of the protein shell formed by VP1, VP2 and VP3. All the three latter proteins contain a beta-sheet structure called beta-barrel jelly roll. VP1 is situated at the 12 fivefold axes, whereas VP2 and VP3 are located at the quasi-sixfold axes. Functionally, lies on the inner surface of the capsid shell. After binding to the host receptor, the capsid undergoes conformational changes. Capsid protein VP4 is released, capsid protein VP1 N-terminus is externalized, and together, they shape a pore in the host membrane through which the viral genome is translocated into the host cell cytoplasm. After genome has been released, the channel shrinks. In terms of biological role, VP0 precursor is a component of immature procapsids. Its function is as follows. Involved in host translation shutoff by inhibiting cap-dependent mRNA translation. Nuclear localization is required for this function. The resulting inhibition of cellular protein synthesis serves to ensure maximal viral gene expression and to evade host immune response. Inhibits the phosphorylation of the leader protein. Affects membrane integrity and causes an increase in membrane permeability. Functionally, associates with and induces structural rearrangements of intracellular membranes. It displays RNA-binding, nucleotide binding and NTPase activities. In terms of biological role, serves as membrane anchor via its hydrophobic domain. Its function is as follows. Forms a primer, VPg-pU, which is utilized by the polymerase for the initiation of RNA chains. Cysteine protease that generates mature viral proteins from the precursor polyprotein. In addition to its proteolytic activity, it binds to viral RNA, and thus influences viral genome replication. RNA and substrate cooperatively bind to the protease. Cleaves host PABP1, this cleavage is important for viral replication. Functionally, replicates the genomic and antigenomic RNAs by recognizing replications specific signals. Performs VPg uridylylation. The protein is Genome polyprotein of Theiler's murine encephalomyelitis virus (strain DA) (TMEV).